The chain runs to 235 residues: Ribonuclease PH (235 aa).

Phosphate contacts are provided by residues arginine 86 and glycine 124–arginine 126.

The protein belongs to the RNase PH family. Homohexameric ring arranged as a trimer of dimers.

It carries out the reaction tRNA(n+1) + phosphate = tRNA(n) + a ribonucleoside 5'-diphosphate. Phosphorolytic 3'-5' exoribonuclease that plays an important role in tRNA 3'-end maturation. Removes nucleotide residues following the 3'-CCA terminus of tRNAs; can also add nucleotides to the ends of RNA molecules by using nucleoside diphosphates as substrates, but this may not be physiologically important. Probably plays a role in initiation of 16S rRNA degradation (leading to ribosome degradation) during starvation. In Francisella tularensis subsp. holarctica (strain FTNF002-00 / FTA), this protein is Ribonuclease PH.